A 168-amino-acid polypeptide reads, in one-letter code: Plastocyanin A, chloroplastic (168 aa).

The N-terminal 69 residues, 1–69 (MATVTSAAVS…SAMIASNAMA (69 aa)), are a transit peptide targeting the chloroplast. One can recognise a Plastocyanin-like domain in the interval 70 to 168 (IDVLLGADDG…AGMVGKVTVN (99 aa)). Residues histidine 106, cysteine 153, histidine 156, and methionine 161 each coordinate Cu cation.

This sequence belongs to the plastocyanin family. It depends on Cu(2+) as a cofactor.

It is found in the plastid. The protein localises to the chloroplast thylakoid membrane. In terms of biological role, participates in electron transfer between P700 and the cytochrome b6-f complex in photosystem I. The protein is Plastocyanin A, chloroplastic (PETE) of Populus nigra (Lombardy poplar).